Consider the following 555-residue polypeptide: Transmembrane protein 87B (555 aa).

The signal sequence occupies residues 1 to 42 (MVAACRSVAGLLPRRRRCFPARAPLLRVALCLLCWTPAAVRA). Over 43–214 (VPELGLWLET…PHGYISASDW (172 aa)) the chain is Lumenal. N-linked (GlcNAc...) asparagine glycosylation is found at N68 and N197. The helical transmembrane segment at 215 to 235 (PLMIFYMVMCIVYILYGILWL) threads the bilayer. The Cytoplasmic portion of the chain corresponds to 236-247 (TWSACYWKDILR). A helical transmembrane segment spans residues 248–268 (IQFWIAAVIFLGMLEKAVFYS). Over 269 to 299 (EYQNISNTGLSTQGLLIFAELISAIKRTLAR) the chain is Lumenal. Residue N272 is glycosylated (N-linked (GlcNAc...) asparagine). The helical transmembrane segment at 300 to 320 (LLVIIVSLGYGIVKPRLGTVM) threads the bilayer. At 321-322 (HR) the chain is on the cytoplasmic side. A helical membrane pass occupies residues 323–343 (VIGLGLLYLIFAAVEGVMRVI). At 344 to 350 (GGSNHLA) the chain is on the lumenal side. A helical transmembrane segment spans residues 351-371 (VVLDDIILAVIDSIFVWFIFI). Topologically, residues 372–396 (SLAQTMKTLRLRKNTVKFSLYRHFK) are cytoplasmic. Residues 397-417 (NTLIFAVLASIVFMGWTTKTF) form a helical membrane-spanning segment. Residues 418–429 (RIAKCQSDWMER) lie on the Lumenal side of the membrane. The chain crosses the membrane as a helical span at residues 430–450 (WVDDAFWSFLFSLILIVIMFL). Over 451–555 (WRPSANNQRY…EKMFSSEKIM (105 aa)) the chain is Cytoplasmic. Residues S469, S494, S496, and S534 each carry the phosphoserine modification.

The protein belongs to the LU7TM family. TMEM87 subfamily.

The protein resides in the golgi apparatus membrane. Its function is as follows. May be involved in retrograde transport from endosomes to the trans-Golgi network (TGN). The chain is Transmembrane protein 87B from Homo sapiens (Human).